The sequence spans 60 residues: Homeobox protein engrailed-like B (60 aa).

Positions 1-41 (VEQLQRLKSEFGASRYLTEARRQALAQELRLNEAQIKIWFQ) form a DNA-binding region, homeobox.

Belongs to the engrailed homeobox family.

The protein localises to the nucleus. This is Homeobox protein engrailed-like B from Myxine glutinosa (Atlantic hagfish).